The primary structure comprises 296 residues: Cytidine deaminase (296 aa).

2 consecutive CMP/dCMP-type deaminase domains span residues 47 to 167 (DSHE…FGPA) and 186 to 296 (ESDD…VDPV). Residue 88 to 90 (NLE) participates in substrate binding. Histidine 101 provides a ligand contact to Zn(2+). Glutamate 103 (proton donor) is an active-site residue. Cysteine 128 and cysteine 131 together coordinate Zn(2+).

Belongs to the cytidine and deoxycytidylate deaminase family. In terms of assembly, homodimer. The cofactor is Zn(2+).

It catalyses the reaction cytidine + H2O + H(+) = uridine + NH4(+). The catalysed reaction is 2'-deoxycytidine + H2O + H(+) = 2'-deoxyuridine + NH4(+). Functionally, this enzyme scavenges exogenous and endogenous cytidine and 2'-deoxycytidine for UMP synthesis. This chain is Cytidine deaminase, found in Shewanella amazonensis (strain ATCC BAA-1098 / SB2B).